We begin with the raw amino-acid sequence, 906 residues long: Protein translocase subunit SecA (906 aa).

ATP-binding positions include Q86, 104 to 108 (GEGKT), and D499. Residues C890, C892, C901, and H902 each contribute to the Zn(2+) site.

It belongs to the SecA family. As to quaternary structure, monomer and homodimer. Part of the essential Sec protein translocation apparatus which comprises SecA, SecYEG and auxiliary proteins SecDF-YajC and YidC. Requires Zn(2+) as cofactor.

The protein localises to the cell inner membrane. It localises to the cytoplasm. The catalysed reaction is ATP + H2O + cellular proteinSide 1 = ADP + phosphate + cellular proteinSide 2.. In terms of biological role, part of the Sec protein translocase complex. Interacts with the SecYEG preprotein conducting channel. Has a central role in coupling the hydrolysis of ATP to the transfer of proteins into and across the cell membrane, serving both as a receptor for the preprotein-SecB complex and as an ATP-driven molecular motor driving the stepwise translocation of polypeptide chains across the membrane. The polypeptide is Protein translocase subunit SecA (Rickettsia prowazekii (strain Madrid E)).